The chain runs to 391 residues: Formate-dependent phosphoribosylglycinamide formyltransferase (391 aa).

N(1)-(5-phospho-beta-D-ribosyl)glycinamide contacts are provided by residues 20-21 (EL) and Glu80. Residues Arg112, Lys153, 158 to 163 (SSGKGQ), 193 to 196 (EGFI), and Glu201 contribute to the ATP site. Positions 117–306 (RLAAEELDLS…EFALHVRAFT (190 aa)) constitute an ATP-grasp domain. 2 residues coordinate Mg(2+): Glu265 and Glu277. N(1)-(5-phospho-beta-D-ribosyl)glycinamide contacts are provided by residues Asp284, Lys354, and 361 to 362 (RR).

It belongs to the PurK/PurT family. In terms of assembly, homodimer.

The catalysed reaction is N(1)-(5-phospho-beta-D-ribosyl)glycinamide + formate + ATP = N(2)-formyl-N(1)-(5-phospho-beta-D-ribosyl)glycinamide + ADP + phosphate + H(+). It functions in the pathway purine metabolism; IMP biosynthesis via de novo pathway; N(2)-formyl-N(1)-(5-phospho-D-ribosyl)glycinamide from N(1)-(5-phospho-D-ribosyl)glycinamide (formate route): step 1/1. In terms of biological role, involved in the de novo purine biosynthesis. Catalyzes the transfer of formate to 5-phospho-ribosyl-glycinamide (GAR), producing 5-phospho-ribosyl-N-formylglycinamide (FGAR). Formate is provided by PurU via hydrolysis of 10-formyl-tetrahydrofolate. The protein is Formate-dependent phosphoribosylglycinamide formyltransferase of Vibrio parahaemolyticus serotype O3:K6 (strain RIMD 2210633).